A 127-amino-acid chain; its full sequence is Histone H2B type 1-A (127 aa).

Positions 1–36 (MPEVSSKGATISKKGFKKAVVKTQKKEGKKRKRTRK) are disordered. P2 is modified (N-acetylproline). Residues K7, K13, K14, K17, K18, K22, and K25 each carry the N6-acetyllysine; alternate modification. K7, K13, K14, K17, K18, K22, K25, and K36 each carry N6-crotonyllysine; alternate. K7 and K13 each carry N6-lactoyllysine; alternate. K7 participates in a covalent cross-link: Glycyl lysine isopeptide (Lys-Gly) (interchain with G-Cter in SUMO2); alternate. 4 positions are modified to N6-lactoyllysine; alternate: K17, K18, K22, and K25. Residue K22 forms a Glycyl lysine isopeptide (Lys-Gly) (interchain with G-Cter in SUMO2); alternate linkage. At K36 the chain carries N6-succinyllysine; alternate. K36 is covalently cross-linked (Glycyl lysine isopeptide (Lys-Gly) (interchain with G-Cter in ubiquitin); alternate). S38 carries the post-translational modification Phosphoserine. N6-lactoyllysine; alternate is present on K45. At K48 the chain carries N6-methyllysine. At K59 the chain carries N6,N6-dimethyllysine. Position 81 is a dimethylated arginine (R81). At S86 the chain carries Phosphoserine. An N6-acetyllysine; alternate modification is found at K87. K87 is subject to N6-lactoyllysine; alternate. The residue at position 87 (K87) is an N6,N6,N6-trimethyllysine; alternate. Omega-N-methylarginine is present on residues R88 and R94. Position 110 is an N6-lactoyllysine; alternate (K110). The residue at position 110 (K110) is an N6-methyllysine. T117 carries the post-translational modification Phosphothreonine. N6-lactoyllysine; alternate occurs at positions 118 and 122. K118 and K122 each carry N6-succinyllysine; alternate. N6-methylated lysine; alternate is present on K118. A Glycyl lysine isopeptide (Lys-Gly) (interchain with G-Cter in ubiquitin); alternate cross-link involves residue K122.

It belongs to the histone H2B family. As to quaternary structure, the nucleosome is a histone octamer containing two molecules each of H2A, H2B, H3 and H4 assembled in one H3-H4 heterotetramer and two H2A-H2B heterodimers. Monoubiquitination at Lys-36 (H2BK34Ub) by the MSL1/MSL2 dimer is required for histone H3 'Lys-4' (H3K4me) and 'Lys-79' (H3K79me) methylation and transcription activation at specific gene loci, such as HOXA9 and MEIS1 loci. Similarly, monoubiquitination at Lys-122 (H2BK120Ub) by the RNF20/40 complex gives a specific tag for epigenetic transcriptional activation and is also prerequisite for histone H3 'Lys-4' and 'Lys-79' methylation. It also functions cooperatively with the FACT dimer to stimulate elongation by RNA polymerase II. H2BK120Ub also acts as a regulator of mRNA splicing: deubiquitination by USP49 is required for efficient cotranscriptional splicing of a large set of exons. Post-translationally, crotonylation (Kcr) is specifically present in male germ cells and marks testis-specific genes in post-meiotic cells, including X-linked genes that escape sex chromosome inactivation in haploid cells. Crotonylation marks active promoters and enhancers and confers resistance to transcriptional repressors. It is also associated with post-meiotically activated genes on autosomes. In terms of processing, acetylated during spermatogenesis. Acetylated form is most abundant in spermatogonia compared to spermatocytes and round spermatids. Phosphorylated at Thr-117 in spermatogonia, spermatocytes and round spermatids. Post-translationally, methylated at Lys-118 in spermatogonia, spermatocytes and round spermatids. In terms of processing, lactylated in macrophages by EP300/P300 by using lactoyl-CoA directly derived from endogenous or exogenous lactate, leading to stimulates gene transcription. As to expression, mainly expressed in testis, and the corresponding protein is also present in mature sperm (at protein level). Also found in some fat cells.

Its subcellular location is the nucleus. The protein localises to the chromosome. Variant histone specifically required to direct the transformation of dissociating nucleosomes to protamine in male germ cells. Entirely replaces classical histone H2B prior nucleosome to protamine transition and probably acts as a nucleosome dissociating factor that creates a more dynamic chromatin, facilitating the large-scale exchange of histones. Core component of nucleosome. Nucleosomes wrap and compact DNA into chromatin, limiting DNA accessibility to the cellular machineries which require DNA as a template. Histones thereby play a central role in transcription regulation, DNA repair, DNA replication and chromosomal stability. DNA accessibility is regulated via a complex set of post-translational modifications of histones, also called histone code, and nucleosome remodeling. Also found in fat cells, its function and the presence of post-translational modifications specific to such cells are still unclear. The chain is Histone H2B type 1-A from Homo sapiens (Human).